The chain runs to 626 residues: Chaperone protein HtpG (626 aa).

Residues 1 to 329 (MSEETLSFQA…SSDLPLNVSR (329 aa)) form an a; substrate-binding region. The tract at residues 330 to 549 (EMLQDDPRLR…EGAMSLHLQK (220 aa)) is b. Positions 550-626 (LLRQANQGSE…LTEVMGKGLI (77 aa)) are c.

The protein belongs to the heat shock protein 90 family. Homodimer.

It is found in the cytoplasm. Functionally, molecular chaperone. Has ATPase activity. The chain is Chaperone protein HtpG from Rhodospirillum rubrum (strain ATCC 11170 / ATH 1.1.1 / DSM 467 / LMG 4362 / NCIMB 8255 / S1).